Here is a 485-residue protein sequence, read N- to C-terminus: MEVRTRFAPSPTGHLHIGGARTALFNYLFAKRYGGKFILRIEDTDLERSSIESEKVIIESLRWLGIEWDEGVEVGGPYGPYRSTERVDIYKKYVDVLFEKGYAYYCYCTEEELEAQRQELLSKGQMPRYLGKCRNLTEDQKRRFEQEGRKPTVRFKVPEGVKIVVHDLVRGDVEFLSDDIGDFVIVKSDGIPTYNFAVVIDDHLMKISHVIRGEEHLSNTPRQILIYNALGFELPQFAHVSLILGKDRTKMSKRHGSTWVEQYRDQGYLKEGLINFLALLGWSPPEDREIFDMEYLIENFSLERVSKNPAIFDIDKLNYINSQHIKLKSLDELTQMCIPYFVEAGYIKEDEAKSKFEWLKKIVKSVYEGLDYLSQIKDRVDIFFNNEVKIEEDEAKEVLKWDHVKDLINVFENKIRQMNELTPEAIKLLFKEIQKETGYKGKNLFMPIRVALTGKTHGPELVEIIEIVGKENILKRLEFFKTWYN.

Positions 9 to 19 (PSPTGHLHIGG) match the 'HIGH' region motif. The 'KMSKS' region signature appears at 250–254 (KMSKR). K253 is an ATP binding site.

The protein belongs to the class-I aminoacyl-tRNA synthetase family. Glutamate--tRNA ligase type 1 subfamily. In terms of assembly, monomer.

It is found in the cytoplasm. The enzyme catalyses tRNA(Glu) + L-glutamate + ATP = L-glutamyl-tRNA(Glu) + AMP + diphosphate. In terms of biological role, catalyzes the attachment of glutamate to tRNA(Glu) in a two-step reaction: glutamate is first activated by ATP to form Glu-AMP and then transferred to the acceptor end of tRNA(Glu). This chain is Glutamate--tRNA ligase 1, found in Caldicellulosiruptor saccharolyticus (strain ATCC 43494 / DSM 8903 / Tp8T 6331).